The sequence spans 382 residues: Lipid-A-disaccharide synthase (382 aa).

The protein belongs to the LpxB family.

It carries out the reaction 2-N,3-O-bis[(3R)-3-hydroxytetradecanoyl]-alpha-D-glucosaminyl 1-phosphate + UDP-2-N,3-O-bis[(3R)-3-hydroxytetradecanoyl]-alpha-D-glucosamine = lipid A disaccharide (E. coli) + UDP + H(+). The enzyme catalyses a lipid X + a UDP-2-N,3-O-bis[(3R)-3-hydroxyacyl]-alpha-D-glucosamine = a lipid A disaccharide + UDP + H(+). Its pathway is glycolipid biosynthesis; lipid IV(A) biosynthesis; lipid IV(A) from (3R)-3-hydroxytetradecanoyl-[acyl-carrier-protein] and UDP-N-acetyl-alpha-D-glucosamine: step 5/6. Condensation of UDP-2,3-diacylglucosamine and 2,3-diacylglucosamine-1-phosphate to form lipid A disaccharide, a precursor of lipid A, a phosphorylated glycolipid that anchors the lipopolysaccharide to the outer membrane of the cell. The polypeptide is Lipid-A-disaccharide synthase (Shigella boydii serotype 18 (strain CDC 3083-94 / BS512)).